A 296-amino-acid chain; its full sequence is Lipoyl synthase (296 aa).

Cys37, Cys42, Cys48, Cys63, Cys67, Cys70, and Ser276 together coordinate [4Fe-4S] cluster. The Radical SAM core domain maps to 49 to 265 (WSKKHTTVMI…ERVAKTKGFL (217 aa)).

This sequence belongs to the radical SAM superfamily. Lipoyl synthase family. It depends on [4Fe-4S] cluster as a cofactor.

It is found in the cytoplasm. The catalysed reaction is [[Fe-S] cluster scaffold protein carrying a second [4Fe-4S](2+) cluster] + N(6)-octanoyl-L-lysyl-[protein] + 2 oxidized [2Fe-2S]-[ferredoxin] + 2 S-adenosyl-L-methionine + 4 H(+) = [[Fe-S] cluster scaffold protein] + N(6)-[(R)-dihydrolipoyl]-L-lysyl-[protein] + 4 Fe(3+) + 2 hydrogen sulfide + 2 5'-deoxyadenosine + 2 L-methionine + 2 reduced [2Fe-2S]-[ferredoxin]. It participates in protein modification; protein lipoylation via endogenous pathway; protein N(6)-(lipoyl)lysine from octanoyl-[acyl-carrier-protein]: step 2/2. Functionally, catalyzes the radical-mediated insertion of two sulfur atoms into the C-6 and C-8 positions of the octanoyl moiety bound to the lipoyl domains of lipoate-dependent enzymes, thereby converting the octanoylated domains into lipoylated derivatives. In Rickettsia massiliae (strain Mtu5), this protein is Lipoyl synthase.